The primary structure comprises 427 residues: Cryptic catabolic NAD-specific glutamate dehydrogenase GudB (427 aa).

Residues Lys-80 and Lys-107 each contribute to the substrate site. Lys-119 functions as the Proton donor in the catalytic mechanism. Residues Thr-203 and Asn-234 each contribute to the NAD(+) site. Position 361 (Ser-361) interacts with substrate.

This sequence belongs to the Glu/Leu/Phe/Val dehydrogenases family. In terms of assembly, homohexamer.

It carries out the reaction L-glutamate + NAD(+) + H2O = 2-oxoglutarate + NH4(+) + NADH + H(+). Its function is as follows. GudB seems to be intrinsically inactive, however spontaneous mutations removing a 9-bp direct repeat within the wild-type gudB sequence activated the GudB protein and allowed more-efficient utilization of amino acids of the glutamate family (called gutB1). This 3 amino acid insertion presumably causes severe destabilization of the fold of the protein, leading to an inactive enzyme that is very quickly degraded. The cryptic GudB serves as a buffer that may compensate for mutations in the rocG gene and that can also be decryptified for the utilization of glutamate as a single carbon source in the absence of arginine. It is unable to synthesize glutamate. In Bacillus subtilis (strain 168), this protein is Cryptic catabolic NAD-specific glutamate dehydrogenase GudB.